Reading from the N-terminus, the 435-residue chain is Xylose isomerase (435 aa).

Active-site residues include H100 and D103. Mg(2+) is bound by residues E231, E267, H270, D295, D306, D308, and D338.

The protein belongs to the xylose isomerase family. As to quaternary structure, homotetramer. The cofactor is Mg(2+).

The protein resides in the cytoplasm. The enzyme catalyses alpha-D-xylose = alpha-D-xylulofuranose. This chain is Xylose isomerase, found in Brucella suis biovar 1 (strain 1330).